Here is a 418-residue protein sequence, read N- to C-terminus: Gamma-glutamyl phosphate reductase (418 aa).

Belongs to the gamma-glutamyl phosphate reductase family.

The protein localises to the cytoplasm. The catalysed reaction is L-glutamate 5-semialdehyde + phosphate + NADP(+) = L-glutamyl 5-phosphate + NADPH + H(+). Its pathway is amino-acid biosynthesis; L-proline biosynthesis; L-glutamate 5-semialdehyde from L-glutamate: step 2/2. Functionally, catalyzes the NADPH-dependent reduction of L-glutamate 5-phosphate into L-glutamate 5-semialdehyde and phosphate. The product spontaneously undergoes cyclization to form 1-pyrroline-5-carboxylate. In Agathobacter rectalis (strain ATCC 33656 / DSM 3377 / JCM 17463 / KCTC 5835 / VPI 0990) (Eubacterium rectale), this protein is Gamma-glutamyl phosphate reductase.